The sequence spans 346 residues: MAVGIFGLIPSSSPDELRKILQALSTKWGDVVEDFESLEVKPMKGAMTNEVFMVSWPRKETNLRCRKLLVRVYGEGVELFFNRDDEIRTFEYVARHGHGPTLLGRFAGGRVEEFIHARTLSATDLRDPNISALVASKLRRFHSIHIPGDRIMLIWDRMRTWVGQAKNLCSNEHSTEFGLDDIEDEINLLEQEVNNEQEIGFCHNDLQYGNIMIDEETNAITIIDYEYASYNPIAYDIANHFCEMAADYHSNTPHILDYTLYPGEEERRRFICNYLTSSGEEAREEDIEQLLDDIEKYTLASHLFWGLWGIISGYVNKIEFDYIEYSRQRFKQYWLRKPKLLSFFPS.

ATP-binding residues include R71, Q207, and D224.

The protein belongs to the choline/ethanolamine kinase family.

The enzyme catalyses choline + ATP = phosphocholine + ADP + H(+). Its pathway is phospholipid metabolism; phosphatidylcholine biosynthesis; phosphocholine from choline: step 1/1. Its function is as follows. Involved in phospholipid biosynthesis. Catalyzes the first step in phosphatidylcholine biosynthesis. The chain is Probable choline kinase 3 from Arabidopsis thaliana (Mouse-ear cress).